The following is a 66-amino-acid chain: DNA gyrase inhibitor YacG (66 aa).

Cysteine 10, cysteine 13, cysteine 29, and cysteine 33 together coordinate Zn(2+). Residues 46–66 form a disordered region; sequence KRIPSDVQITDSDEWSDETRY. Residues 56–66 show a composition bias toward acidic residues; the sequence is DSDEWSDETRY.

This sequence belongs to the DNA gyrase inhibitor YacG family. Interacts with GyrB. It depends on Zn(2+) as a cofactor.

Inhibits all the catalytic activities of DNA gyrase by preventing its interaction with DNA. Acts by binding directly to the C-terminal domain of GyrB, which probably disrupts DNA binding by the gyrase. The protein is DNA gyrase inhibitor YacG of Sodalis glossinidius (strain morsitans).